Here is a 559-residue protein sequence, read N- to C-terminus: Formate--tetrahydrofolate ligase (559 aa).

ATP is bound at residue 68–75 (TPAGEGKT).

Belongs to the formate--tetrahydrofolate ligase family. Homotetramer.

The enzyme catalyses (6S)-5,6,7,8-tetrahydrofolate + formate + ATP = (6R)-10-formyltetrahydrofolate + ADP + phosphate. Its pathway is one-carbon metabolism; tetrahydrofolate interconversion. This Moorella thermoacetica (Clostridium thermoaceticum) protein is Formate--tetrahydrofolate ligase.